The following is a 2173-amino-acid chain: Mediator of DNA damage checkpoint protein 1 (2173 aa).

The segment covering Met-1–Gln-19 has biased composition (acidic residues). Positions Met-1–Glu-22 are disordered. The interval Met-1–Thr-150 is interaction with CHEK2. Residues Glu-2–Thr-222 are interaction with the MRN complex. A Phosphothreonine modification is found at Thr-4. The 52-residue stretch at Asn-54–Lys-105 folds into the FHA domain. At Ser-108 the chain carries Phosphoserine. The required for nuclear localization (NLS1) stretch occupies residues Leu-145 to Glu-570. The residue at position 146 (Thr-146) is a Phosphothreonine. A phosphoserine mark is found at Ser-168, Ser-176, Ser-198, and Ser-220. Residues Ser-198–Leu-320 are disordered. Thr-222 carries the phosphothreonine modification. A compositionally biased stretch (low complexity) spans Gly-227 to Thr-244. A compositionally biased stretch (basic and acidic residues) spans Gln-259 to Val-276. Phosphoserine is present on Ser-301. Thr-303 carries the phosphothreonine modification. Residues Asp-308–Leu-320 show a composition bias toward basic and acidic residues. Ser-331 carries the phosphoserine modification. Thr-333 bears the Phosphothreonine mark. Positions Gly-359–Glu-383 are disordered. Phosphoserine is present on residues Ser-374 and Ser-378. A Phosphothreonine modification is found at Thr-380. Phosphoserine is present on residues Ser-396, Ser-399, and Ser-404. Phosphothreonine is present on Thr-406. The residue at position 413 (Ser-413) is a Phosphoserine. The disordered stretch occupies residues Leu-444–Ser-515. Thr-451 bears the Phosphothreonine mark. Ser-455 is subject to Phosphoserine. Phosphothreonine is present on Thr-457. 6 positions are modified to phosphoserine: Ser-487, Ser-497, Ser-500, Ser-506, Ser-507, and Ser-515. Thr-525 carries the phosphothreonine modification. A Phosphoserine modification is found at Ser-592. Residue Lys-618 forms a Glycyl lysine isopeptide (Lys-Gly) (interchain with G-Cter in SUMO1); alternate linkage. Residue Lys-618 forms a Glycyl lysine isopeptide (Lys-Gly) (interchain with G-Cter in SUMO2); alternate linkage. The residue at position 631 (Ser-631) is a Phosphoserine. Disordered regions lie at residues Val-652–Asp-697 and His-773–Ser-1770. Over residues Gly-673 to Glu-687 the composition is skewed to basic and acidic residues. The span at Asp-688–Asp-697 shows a compositional bias: acidic residues. Phosphoserine occurs at positions 782 and 795. The residue at position 814 (Lys-814) is an N6-acetyllysine. 4 stretches are compositionally biased toward basic and acidic residues: residues Glu-821 to Thr-846, Glu-853 to Lys-864, Asp-870 to Gln-903, and Ala-916 to Pro-953. A phosphoserine mark is found at Ser-957, Ser-1000, Ser-1035, Ser-1070, and Ser-1088. Over residues Ser-957–Ser-969 the composition is skewed to polar residues. Over residues Thr-1079 to Glu-1090 the composition is skewed to basic and acidic residues. Basic residues predominate over residues Pro-1105 to Ser-1115. The segment covering Pro-1131 to Ser-1156 has biased composition (polar residues). Positions Ser-1150–Glu-1694 are interaction with the PRKDC complex. Residues Val-1157–Glu-1169 are compositionally biased toward low complexity. Thr-1159 carries the phosphothreonine modification. Positions Gln-1171–Thr-1189 are enriched in polar residues. Position 1200 is a phosphothreonine (Thr-1200). Phosphoserine is present on Ser-1237. Residues Thr-1241, Thr-1282, and Thr-1304 each carry the phosphothreonine modification. Residues Val-1280–Glu-1292 are compositionally biased toward low complexity. Residues Gln-1294–Ser-1320 show a composition bias toward polar residues. The segment covering Val-1321–Glu-1333 has biased composition (low complexity). Residues Gln-1335–Thr-1353 are compositionally biased toward polar residues. Residues Thr-1390 to Ser-1402 are compositionally biased toward low complexity. 4 stretches are compositionally biased toward polar residues: residues Pro-1418–Pro-1434, Lys-1456–Ser-1487, Gln-1499–Lys-1527, and Gln-1540–Arg-1559. Phosphoserine is present on residues Ser-1483 and Ser-1484. At Lys-1486 the chain carries N6-acetyllysine. Thr-1509 and Thr-1550 each carry phosphothreonine. Residues Val-1567–Pro-1578 show a composition bias toward low complexity. Residues Gln-1581–Thr-1598 are compositionally biased toward polar residues. Thr-1617 and Thr-1632 each carry phosphothreonine. A compositionally biased stretch (polar residues) spans Ser-1626–Ala-1639. At Ser-1648 the chain carries Phosphoserine. Residues Thr-1651 and Thr-1673 each carry the phosphothreonine modification. Polar residues predominate over residues Pro-1664 to Ala-1680. Ser-1688 carries the post-translational modification Phosphoserine. 4 positions are modified to phosphothreonine: Thr-1692, Thr-1714, Thr-1748, and Thr-1755. Residues Pro-1705–Ala-1721 are compositionally biased toward polar residues. Residues Gln-1761–Ser-1770 are compositionally biased toward polar residues. The residue at position 1765 (Ser-1765) is a Phosphoserine. At Thr-1781 the chain carries Phosphothreonine. The required for nuclear localization (NLS2) stretch occupies residues Pro-1782–Thr-2173. Phosphoserine occurs at positions 1786 and 1795. A disordered region spans residues Arg-1809–Asn-1971. A Glycyl lysine isopeptide (Lys-Gly) (interchain with G-Cter in SUMO2) cross-link involves residue Lys-1824. Ser-1859 carries the phosphoserine modification. Lys-1874 is covalently cross-linked (Glycyl lysine isopeptide (Lys-Gly) (interchain with G-Cter in SUMO2)). Thr-1884 carries the phosphothreonine modification. Ser-1904 is subject to Phosphoserine. Residues His-1907 to Thr-1920 are compositionally biased toward polar residues. Lys-1924 participates in a covalent cross-link: Glycyl lysine isopeptide (Lys-Gly) (interchain with G-Cter in SUMO1); alternate. Lys-1924 is covalently cross-linked (Glycyl lysine isopeptide (Lys-Gly) (interchain with G-Cter in SUMO2); alternate). Positions Ala-1931 to Met-1941 are enriched in basic and acidic residues. Thr-1942 carries the phosphothreonine modification. 2 consecutive BRCT domains span residues Ala-1976–Val-2054 and Arg-2075–Ser-2166. Arg-2027 bears the Omega-N-methylarginine mark.

Homodimer. Interacts with H2AX, which requires phosphorylation of H2AX on 'Ser-139'. Interacts with the MRN complex, composed of MRE11, RAD50, and NBN. Interacts with CHEK2, which requires ATM-mediated phosphorylation of 'Thr-68' within the FHA domain of CHEK2. Interacts constitutively with the BRCA1-BARD1 complex, SMC1A and TP53BP1. Interacts with ATM and FANCD2, and these interactions are reduced upon DNA damage. Also interacts with the PRKDC complex, composed of XRCC6/KU70, XRCC5/KU80 and PRKDC/XRCC7. This interaction may be required for PRKDC autophosphorylation, which is essential for DNA double strand break (DSB) repair. When phosphorylated by ATM, interacts with RNF8 (via FHA domain). Interacts with CEP164. When phosphorylated, interacts with APTX (via FHA-like domain). Interacts (when phosphorylated) with TOPBP1; promoting TOPBP1 localization to DNA damage sites during mitosis. Interacts (when phosphorylated) with NBN; promoting NBN and MRN complex localization to DNA damage sites. Post-translationally, phosphorylated upon exposure to ionizing radiation (IR), ultraviolet radiation (UV), and hydroxyurea (HU). Phosphorylation in response to IR requires ATM, NBN, and possibly CHEK2. Also phosphorylated during the G2/M phase of the cell cycle and during activation of the mitotic spindle checkpoint. Phosphorylation at Thr-4 by ATM stabilizes and enhances homodimerization via the FHA domain. Phosphorylated at Ser-168 and Ser-198 by CK2 in response to DNA damage during mitosis, promoting interaction with TOPBP1. Phosphorylated by CK2 in response to DNA damage, promoting interaction with NBN and recruitment of the MRN complex to DNA damage sites. Sumoylation at Lys-1924 by PIAS4 following DNA damage promotes ubiquitin-mediated degradation. In terms of processing, ubiquitinated by RNF4, leading to proteasomal degradation; undergoes 'Lys-48'-linked polyubiquitination.

It localises to the nucleus. The protein localises to the chromosome. In terms of biological role, histone reader protein required for checkpoint-mediated cell cycle arrest in response to DNA damage within both the S phase and G2/M phases of the cell cycle. Specifically recognizes and binds histone H2AX phosphorylated at 'Ser-139', a marker of DNA damage, serving as a scaffold for the recruitment of DNA repair and signal transduction proteins to discrete foci of DNA damage sites. Also required for downstream events subsequent to the recruitment of these proteins. These include phosphorylation and activation of the ATM, CHEK1 and CHEK2 kinases, and stabilization of TP53/p53 and apoptosis. ATM and CHEK2 may also be activated independently by a parallel pathway mediated by TP53BP1. Required for chromosomal stability during mitosis by promoting recruitment of TOPBP1 to DNA double strand breaks (DSBs): TOPBP1 forms filamentous assemblies that bridge MDC1 and tether broken chromosomes during mitosis. Required for the repair of DSBs via homologous recombination by promoting recruitment of NBN component of the MRN complex to DSBs. This Macaca mulatta (Rhesus macaque) protein is Mediator of DNA damage checkpoint protein 1 (MDC1).